The chain runs to 448 residues: Chaperone SurA (448 aa).

The signal sequence occupies residues 1–27 (MKKTLRFAAVASGLVASLITVAPSASA). PpiC domains follow at residues 185–288 (QQDL…RLVE) and 301–399 (IVQT…QVLG).

The protein resides in the periplasm. It catalyses the reaction [protein]-peptidylproline (omega=180) = [protein]-peptidylproline (omega=0). Functionally, chaperone involved in the correct folding and assembly of outer membrane proteins. Recognizes specific patterns of aromatic residues and the orientation of their side chains, which are found more frequently in integral outer membrane proteins. May act in both early periplasmic and late outer membrane-associated steps of protein maturation. The polypeptide is Chaperone SurA (Burkholderia mallei (strain ATCC 23344)).